An 863-amino-acid chain; its full sequence is Alanine--tRNA ligase (863 aa).

Zn(2+) contacts are provided by His-552, His-556, Cys-654, and His-658.

This sequence belongs to the class-II aminoacyl-tRNA synthetase family. Requires Zn(2+) as cofactor.

It is found in the cytoplasm. The enzyme catalyses tRNA(Ala) + L-alanine + ATP = L-alanyl-tRNA(Ala) + AMP + diphosphate. Functionally, catalyzes the attachment of alanine to tRNA(Ala) in a two-step reaction: alanine is first activated by ATP to form Ala-AMP and then transferred to the acceptor end of tRNA(Ala). Also edits incorrectly charged Ser-tRNA(Ala) and Gly-tRNA(Ala) via its editing domain. The sequence is that of Alanine--tRNA ligase from Nitrosomonas europaea (strain ATCC 19718 / CIP 103999 / KCTC 2705 / NBRC 14298).